The chain runs to 135 residues: Large ribosomal subunit protein bL19 (135 aa).

The protein belongs to the bacterial ribosomal protein bL19 family.

Functionally, this protein is located at the 30S-50S ribosomal subunit interface and may play a role in the structure and function of the aminoacyl-tRNA binding site. The polypeptide is Large ribosomal subunit protein bL19 (Xanthomonas campestris pv. campestris (strain 8004)).